Here is a 466-residue protein sequence, read N- to C-terminus: MQQHFHFDAIVIGSGPGGEGAAMGLVKQGARVAVIERYNNVGGGCTHWGTIPSKALRHAVSRIIEFNQNPLYSDNARTIKSSFADILNHADRVINQQTRMRQGFYDRNHCHMFSGDASFIDANTVNVRYADGTSDTLQADNIVIATGSRPYRPVNVDFNHERIYDSDTILQLSHEPQHVIIYGAGVIGCEYASIFRGLSVKVDLINTRDRLLAFLDQEMSDALSYHFWNNGVVIRHNEEFEQIEGTTDGVIVHLKSGKKVKADCLLYANGRTGNTSGLGLENIGLEADSRGLLKVNSMYQTALSHVYAVGDVIGYPSLASAAYDQGRIAAQAMIKGEANVHLIEDIPTGIYTIPEISSVGKTEQELTAMKVPYEVGRAQFKHLARAQIVGMDTGSLKILFHRETKQILGIHCFGERAAEIIHIGQAIMEQKGEGNTLEYFVNTTFNYPTMAEAYRVAALNGLNRLF.

Residue 36-45 (ERYNNVGGGC) participates in FAD binding.

This sequence belongs to the class-I pyridine nucleotide-disulfide oxidoreductase family. It depends on FAD as a cofactor.

It is found in the cytoplasm. The enzyme catalyses NAD(+) + NADPH = NADH + NADP(+). In terms of biological role, conversion of NADPH, generated by peripheral catabolic pathways, to NADH, which can enter the respiratory chain for energy generation. This Yersinia pseudotuberculosis serotype O:1b (strain IP 31758) protein is Soluble pyridine nucleotide transhydrogenase.